Here is a 113-residue protein sequence, read N- to C-terminus: Hydrogenase maturation factor HypA (113 aa).

His2 is a Ni(2+) binding site. Residues Cys73, Cys76, Cys89, and Cys92 each coordinate Zn(2+).

Belongs to the HypA/HybF family.

Its function is as follows. Involved in the maturation of [NiFe] hydrogenases. Required for nickel insertion into the metal center of the hydrogenase. The polypeptide is Hydrogenase maturation factor HypA (Aeromonas hydrophila subsp. hydrophila (strain ATCC 7966 / DSM 30187 / BCRC 13018 / CCUG 14551 / JCM 1027 / KCTC 2358 / NCIMB 9240 / NCTC 8049)).